We begin with the raw amino-acid sequence, 239 residues long: MTSNLKYKRVLLKVSGEALMGDKQFGHDYDTIKKIAGDIKELIDSGVEVAIVVGGGNIYRGINAALVGMDRASADYIGMLATVINALTLQNVMESLNIYTRVLSAIPMMSVCEPYIRRRAKRHMEKGRVVIFAGGTGNPFCTTDSAAVLRAIEMNCDVLLKATQVDGVYDSDPKKNPNAKKYFTINYKDVITNNLQVMDLATIAIARENKLPIRVFSIKEQGNIAKVVQDQGEYTTIEE.

An ATP-binding site is contributed by 13–16; the sequence is KVSG. Gly-55 serves as a coordination point for UMP. Residues Gly-56 and Arg-60 each contribute to the ATP site. Residues Asp-75 and 136-143 each bind UMP; that span reads TGNPFCTT. Thr-163, Gln-164, Tyr-169, and Asp-172 together coordinate ATP.

Belongs to the UMP kinase family. In terms of assembly, homohexamer.

It localises to the cytoplasm. The catalysed reaction is UMP + ATP = UDP + ADP. It functions in the pathway pyrimidine metabolism; CTP biosynthesis via de novo pathway; UDP from UMP (UMPK route): step 1/1. With respect to regulation, inhibited by UTP. Its function is as follows. Catalyzes the reversible phosphorylation of UMP to UDP. This Rickettsia bellii (strain RML369-C) protein is Uridylate kinase.